A 1309-amino-acid chain; its full sequence is MNSAPRNAGAARSVDRRGFIAACGLLVLLVVRMLGAADATRIFDIENIPVVKYVAVAGRNVTLNCPGVTEHSLVDTLVWRTSQTIAEYVDGGLPLVSSLRITLLPDNFSLHFNPAFASDTDEYSCLVNDRHSPDALVDLLVQDVPDPPGRPLVLSFTSRTVNLSWAYTQDPRNAPINNFVIETRVGENGEWDQVDPLYTNSNEAFYQVTGLVPFTVYSFRVIAVNELGHSPPSKESYYFVTLREAPTGKPVTTIAHNTSATSVYISWKPPPAETILGEFLGYRITYRARDKGTDDDVKEIYIRDSTVESHEIHHLETYTQYLASIQVFNPEGLGPPTTVLVMTDEGVPSKPLNLSVLEVTSTTIKITWREPEKLNGAIHGYRVYYVHQNQTLLHLPILKADAAVNSVYTYTLSNLKPYTDYKIIVAAFTKKFDGEPSEVSQRTDISGPSAPKVVNLTCHSQHELLFGWHIPQTYYNTIDYYIISYRNLEHSEYKDIRLTANSSIVETSMIIPNLTTNMVYEVKVRAASASVINPKQIILGSYSEPKKISLQLHCEKIPQPSQRQVYDDYNLAVLGGIVFSCFGLLLIVLSFLLWKKCFHAAYYYLDDPPACQGANTAGLIDWEAPCEVAGEVRGPIPVTEFAKHVASLHVDGDIGFSKEYEAIQGEALNDEYPSEHSQHPDNKGKNRYLNVIAYDHSRVHLRQVPGQKKHLDYINANYIDGYQRPRSFIGTQGPLPGTFDCFWRMIWEQRVAIIVMITNLVERGRRKCDMYWPKDGAEMYGVIQVRLIREDVMATYTVRTLQIKHTKLKKKKASQSEKLVYQYHYTNWPDHGTPDHPLPVINFVKKSTAANPSDAGPIVVHCSAGVGRTGTYIVLDAMLKQIESKGMLNVFGFLRYIRAQRNYLVQTEEQYIFIHDALVEAIDSGETNIKMDAIGGLVNNIDFIDNQYKLITSYQPKEINLTSALKSVNAIKNRSSLVPLEGSRVHLTPKPGVEGSDYINASWLHGFRRLRDFVVTQHPLIETFKDFWQMVWDHNAQTVVLLSSADNMSFLQFWPNESEPMESDYYRIRMVSETSENNYIVRNFVIQSIQDDYELSVRMFENPMWPDMANPRSIYDFAVRVHERCAQYRNGPIVVVDRYGGFQACQFCCISSLAMQLEYDQTANVYTYAKLYHNKRPGIWSSYEDIRQIYRILSYMPKDLGLLKCTELRTEFDDAAIMTATPDLYSKICSNGSINTHLNSGDGGGNGNDGVPTGNGTNGGLPMSGGGTTTAATIQNGGTVIVKMNGEDNDELSVVVATSNHLNLDHNQS.

The signal sequence occupies residues M1–A36. Residues A37–A572 lie on the Extracellular side of the membrane. N60, N107, N162, N257, N353, N389, N455, N501, and N513 each carry an N-linked (GlcNAc...) asparagine glycan. 4 consecutive Fibronectin type-III domains span residues P147–E244, K249–V347, K350–S449, and A450–H553. Residues V573–L593 traverse the membrane as a helical segment. At W594–S1309 the chain is on the cytoplasmic side. 2 consecutive Tyrosine-protein phosphatase domains span residues F656–A921 and I944–M1196. C862 serves as the catalytic Phosphocysteine intermediate. The segment at N1239–T1269 is disordered. Residues G1256–T1268 show a composition bias toward gly residues.

This sequence belongs to the protein-tyrosine phosphatase family. Receptor class subfamily. Interacts with C-type lectin mosGCTL-1; the interaction probably mediates the recruitment of West Nile virus particles in complex with C-type lectin mosGCTL-1 to the cell surface. Interacts with C-type lectin mosGCTL-7; the interaction probably mediates the recruitment of Japanese encephalitis virus particles in complex with C-type lectin mosGCTL-7 to the cell surface. In terms of tissue distribution, salivary gland (at protein level). Hemolymph. Low-level expression in midgut.

It is found in the cell membrane. The catalysed reaction is O-phospho-L-tyrosyl-[protein] + H2O = L-tyrosyl-[protein] + phosphate. In terms of biological role, putative protein tyrosine-protein phosphatase. Functionally, (Microbial infection) Facilitates West Nile virus infection in mosquitoes probably via recruiting West Nile virus particles in complex with C-type lectin mosGCTL-1 to the cell surface. (Microbial infection) Facilitates Japanese encephalitis virus infection in mosquitoes probably via recruiting Japanese encephalitis virus particles in complex with C-type lectin mosGCTL-7 to the cell surface. This Aedes aegypti (Yellowfever mosquito) protein is Putative receptor-type tyrosine-protein phosphatase mosPTP-1.